Here is a 36-residue protein sequence, read N- to C-terminus: GVSCKCGSKKGVYWFGQITGCPGGHGYKGSCSYVLG.

Cys-6 and Cys-31 are oxidised to a cystine.

It is found in the secreted. The protein resides in the nematocyst. This Bunodosoma cangicum (Sea anemone) protein is Toxin Bcg III 29.21.